The sequence spans 391 residues: 5-amino-6-(D-ribitylamino)uracil--L-tyrosine 4-hydroxyphenyl transferase (391 aa).

The Radical SAM core domain maps to 55 to 302 (VTYVINRNIN…GAVARIYLGN (248 aa)). Positions 69, 73, and 76 each coordinate [4Fe-4S] cluster.

It belongs to the radical SAM superfamily. CofH family. As to quaternary structure, consists of two subunits, CofG and CofH. [4Fe-4S] cluster is required as a cofactor.

The enzyme catalyses 5-amino-6-(D-ribitylamino)uracil + L-tyrosine + S-adenosyl-L-methionine = 5-amino-5-(4-hydroxybenzyl)-6-(D-ribitylimino)-5,6-dihydrouracil + 2-iminoacetate + 5'-deoxyadenosine + L-methionine + H(+). Its pathway is cofactor biosynthesis; coenzyme F0 biosynthesis. In terms of biological role, catalyzes the radical-mediated synthesis of 5-amino-5-(4-hydroxybenzyl)-6-(D-ribitylimino)-5,6-dihydrouracil from 5-amino-6-(D-ribitylamino)uracil and L-tyrosine. The sequence is that of 5-amino-6-(D-ribitylamino)uracil--L-tyrosine 4-hydroxyphenyl transferase from Nostoc sp. (strain PCC 7120 / SAG 25.82 / UTEX 2576).